A 389-amino-acid chain; its full sequence is Lipid-A-disaccharide synthase (389 aa).

The protein belongs to the LpxB family.

The catalysed reaction is a lipid X + a UDP-2-N,3-O-bis[(3R)-3-hydroxyacyl]-alpha-D-glucosamine = a lipid A disaccharide + UDP + H(+). The protein operates within bacterial outer membrane biogenesis; LPS lipid A biosynthesis. Its function is as follows. Condensation of UDP-2,3-diacylglucosamine and 2,3-diacylglucosamine-1-phosphate to form lipid A disaccharide, a precursor of lipid A, a phosphorylated glycolipid that anchors the lipopolysaccharide to the outer membrane of the cell. The chain is Lipid-A-disaccharide synthase from Histophilus somni (strain 2336) (Haemophilus somnus).